The following is a 554-amino-acid chain: Chaperonin GroEL (554 aa).

ATP is bound by residues 30–33 (TLGP), lysine 51, 87–91 (DGTTT), glycine 416, and aspartate 503.

Belongs to the chaperonin (HSP60) family. Forms a cylinder of 14 subunits composed of two heptameric rings stacked back-to-back. Interacts with the co-chaperonin GroES.

Its subcellular location is the cytoplasm. It carries out the reaction ATP + H2O + a folded polypeptide = ADP + phosphate + an unfolded polypeptide.. Together with its co-chaperonin GroES, plays an essential role in assisting protein folding. The GroEL-GroES system forms a nano-cage that allows encapsulation of the non-native substrate proteins and provides a physical environment optimized to promote and accelerate protein folding. The polypeptide is Chaperonin GroEL (Holospora obtusa).